We begin with the raw amino-acid sequence, 85 residues long: Putative regulatory protein DICTH_1339 (85 aa).

It belongs to the RemA family.

This chain is Putative regulatory protein DICTH_1339, found in Dictyoglomus thermophilum (strain ATCC 35947 / DSM 3960 / H-6-12).